Consider the following 246-residue polypeptide: NAD-dependent protein deacetylase (246 aa).

Residues 1-246 (MKMKEFLDLL…RRVMEEGGIS (246 aa)) enclose the Deacetylase sirtuin-type domain. NAD(+) is bound by residues Ala22, Thr26, Phe33, Arg34, Gln98, Ile100, Asp101, and His116. Nicotinamide is bound at residue Phe33. The nicotinamide site is built by Ile100 and Asp101. Catalysis depends on His116, which acts as the Proton acceptor. Zn(2+) is bound by residues Cys124, Cys127, Cys148, and Cys151. Residues Ser189, Ser190, Asn214, Leu215, Gly216, Asp231, and Val232 each coordinate NAD(+).

This sequence belongs to the sirtuin family. Class U subfamily. The cofactor is Zn(2+).

Its subcellular location is the cytoplasm. The catalysed reaction is N(6)-acetyl-L-lysyl-[protein] + NAD(+) + H2O = 2''-O-acetyl-ADP-D-ribose + nicotinamide + L-lysyl-[protein]. Its activity is regulated as follows. Non-competitively inhibited by nicotinamide in vitro and in vivo, but not by nicotinic acid. Nicotinamide inhibits the deacetylation activity by reacting with a reaction intermediate. Its function is as follows. NAD-dependent protein deacetylase which modulates the activities of several enzymes which are inactive in their acetylated form. Also has depropionylation activity in vitro. Also able to ADP-ribosylate peptide substrates with Arg or Lys in the +2 position. The role of this function in vivo is not clear. This Thermotoga maritima (strain ATCC 43589 / DSM 3109 / JCM 10099 / NBRC 100826 / MSB8) protein is NAD-dependent protein deacetylase.